We begin with the raw amino-acid sequence, 110 residues long: U1-lycotoxin-Ls1kk (110 aa).

Residues 1–20 (MKFVLLFGVLLVTLFSYSSA) form the signal peptide. Residues 21–44 (EMFDDFDQADEDELLSLIEKEEAR) constitute a propeptide that is removed on maturation. 4 disulfide bridges follow: Cys-47/Cys-62, Cys-54/Cys-71, Cys-61/Cys-89, and Cys-73/Cys-87.

This sequence belongs to the neurotoxin 19 (CSTX) family. 03 subfamily. Expressed by the venom gland.

The protein resides in the secreted. This Lycosa singoriensis (Wolf spider) protein is U1-lycotoxin-Ls1kk.